The chain runs to 428 residues: RF4 protein (428 aa).

3 N-linked (GlcNAc...) asparagine glycosylation sites follow: Asn8, Asn205, and Asn344.

In terms of biological role, not known. This Kluyveromyces lactis (strain ATCC 8585 / CBS 2359 / DSM 70799 / NBRC 1267 / NRRL Y-1140 / WM37) (Yeast) protein is RF4 protein (RF4).